We begin with the raw amino-acid sequence, 130 residues long: Protein NrdI (130 aa).

It belongs to the NrdI family.

Functionally, probably involved in ribonucleotide reductase function. This chain is Protein NrdI, found in Bacillus velezensis (strain DSM 23117 / BGSC 10A6 / LMG 26770 / FZB42) (Bacillus amyloliquefaciens subsp. plantarum).